A 286-amino-acid polypeptide reads, in one-letter code: Bark leucoagglutinin (286 aa).

Residues 1 to 28 (ATSNSKPTQVLLATFLTFFFLLLNNVNS) form the signal peptide. Tyr-73 contributes to the N-acetyl-alpha-neuraminyl-(2-&gt;3)-beta-D-galactosyl-(1-&gt;4)-beta-D-glucose binding site. Asn-89 carries N-linked (GlcNAc...) asparagine glycosylation. 2 residues coordinate N-acetyl-alpha-neuraminyl-(2-&gt;3)-beta-D-galactosyl-(1-&gt;4)-beta-D-glucose: Asp-115 and Lys-135. Asn-141 carries N-linked (GlcNAc...) asparagine glycosylation. Residues Glu-155 and Asp-157 each contribute to the Mn(2+) site. The Ca(2+) site is built by Asp-157, Tyr-159, Asp-165, and Asp-168. N-acetyl-alpha-neuraminyl-(2-&gt;3)-beta-D-galactosyl-(1-&gt;4)-beta-D-glucose is bound by residues Tyr-159 and Asp-165. Mn(2+) contacts are provided by Asp-168 and His-173. N-linked (GlcNAc...) asparagine glycosylation is found at Asn-207 and Asn-219. Positions 278–286 (NVHIARYTA) are cleaved as a propeptide — removed in mature form.

The protein belongs to the leguminous lectin family.

Its function is as follows. Sialic acid-binding lectin specifically recognizing the trisaccharide sequence Neu5Ac/Gc-alpha-2,3-Gal-beta-1,4-GlcNAc/Glc. The polypeptide is Bark leucoagglutinin (Maackia amurensis (Amur maackia)).